Here is a 445-residue protein sequence, read N- to C-terminus: Argininosuccinate synthase (445 aa).

ATP-binding positions include 17 to 25 and A43; that span reads AFSGGLDTS. Y99 provides a ligand contact to L-citrulline. 2 residues coordinate ATP: G129 and T131. Residues T131, N135, and D136 each contribute to the L-aspartate site. Residue N135 coordinates L-citrulline. D136 contributes to the ATP binding site. Residues R139 and S192 each coordinate L-citrulline. D194 contacts ATP. T201, E203, and E280 together coordinate L-citrulline.

The protein belongs to the argininosuccinate synthase family. Type 2 subfamily. In terms of assembly, homotetramer.

The protein localises to the cytoplasm. The catalysed reaction is L-citrulline + L-aspartate + ATP = 2-(N(omega)-L-arginino)succinate + AMP + diphosphate + H(+). It participates in amino-acid biosynthesis; L-arginine biosynthesis; L-arginine from L-ornithine and carbamoyl phosphate: step 2/3. In Rhodopseudomonas palustris (strain BisB18), this protein is Argininosuccinate synthase.